We begin with the raw amino-acid sequence, 397 residues long: Monooxygenase 1 (397 aa).

Belongs to the 3-hydroxybenzoate 6-hydroxylase family. As to quaternary structure, monomer. It depends on FAD as a cofactor. Expressed in seedlings, roots, leaves, flowers and siliques.

The protein is Monooxygenase 1 of Arabidopsis thaliana (Mouse-ear cress).